Consider the following 299-residue polypeptide: Biotin synthase (299 aa).

The region spanning 22-252 (TSNLKLDLCS…NVTIKIAAGR (231 aa)) is the Radical SAM core domain. [4Fe-4S] cluster-binding residues include Cys40, Cys44, and Cys47. [2Fe-2S] cluster is bound by residues Cys116, Cys176, and Lys247.

It belongs to the radical SAM superfamily. Biotin synthase family. Homodimer. It depends on [4Fe-4S] cluster as a cofactor. Requires [2Fe-2S] cluster as cofactor.

The catalysed reaction is (4R,5S)-dethiobiotin + (sulfur carrier)-SH + 2 reduced [2Fe-2S]-[ferredoxin] + 2 S-adenosyl-L-methionine = (sulfur carrier)-H + biotin + 2 5'-deoxyadenosine + 2 L-methionine + 2 oxidized [2Fe-2S]-[ferredoxin]. The protein operates within cofactor biosynthesis; biotin biosynthesis; biotin from 7,8-diaminononanoate: step 2/2. Functionally, catalyzes the conversion of dethiobiotin (DTB) to biotin by the insertion of a sulfur atom into dethiobiotin via a radical-based mechanism. The polypeptide is Biotin synthase (Thermotoga petrophila (strain ATCC BAA-488 / DSM 13995 / JCM 10881 / RKU-1)).